A 398-amino-acid chain; its full sequence is Nicotinate phosphoribosyltransferase 2 (398 aa).

The residue at position 224 (His-224) is a Phosphohistidine; by autocatalysis.

It belongs to the NAPRTase family. Transiently phosphorylated on a His residue during the reaction cycle. Phosphorylation strongly increases the affinity for substrates and increases the rate of nicotinate D-ribonucleotide production. Dephosphorylation regenerates the low-affinity form of the enzyme, leading to product release.

It carries out the reaction nicotinate + 5-phospho-alpha-D-ribose 1-diphosphate + ATP + H2O = nicotinate beta-D-ribonucleotide + ADP + phosphate + diphosphate. Its pathway is cofactor biosynthesis; NAD(+) biosynthesis; nicotinate D-ribonucleotide from nicotinate: step 1/1. Catalyzes the synthesis of beta-nicotinate D-ribonucleotide from nicotinate and 5-phospho-D-ribose 1-phosphate at the expense of ATP. The protein is Nicotinate phosphoribosyltransferase 2 of Pseudomonas aeruginosa (strain ATCC 15692 / DSM 22644 / CIP 104116 / JCM 14847 / LMG 12228 / 1C / PRS 101 / PAO1).